Consider the following 360-residue polypeptide: UDP-N-acetylglucosamine--N-acetylmuramyl-(pentapeptide) pyrophosphoryl-undecaprenol N-acetylglucosamine transferase (360 aa).

Residues 13-15 (TGG), R164, S192, and Q293 contribute to the UDP-N-acetyl-alpha-D-glucosamine site.

It belongs to the glycosyltransferase 28 family. MurG subfamily.

Its subcellular location is the cell inner membrane. It carries out the reaction di-trans,octa-cis-undecaprenyl diphospho-N-acetyl-alpha-D-muramoyl-L-alanyl-D-glutamyl-meso-2,6-diaminopimeloyl-D-alanyl-D-alanine + UDP-N-acetyl-alpha-D-glucosamine = di-trans,octa-cis-undecaprenyl diphospho-[N-acetyl-alpha-D-glucosaminyl-(1-&gt;4)]-N-acetyl-alpha-D-muramoyl-L-alanyl-D-glutamyl-meso-2,6-diaminopimeloyl-D-alanyl-D-alanine + UDP + H(+). It participates in cell wall biogenesis; peptidoglycan biosynthesis. Cell wall formation. Catalyzes the transfer of a GlcNAc subunit on undecaprenyl-pyrophosphoryl-MurNAc-pentapeptide (lipid intermediate I) to form undecaprenyl-pyrophosphoryl-MurNAc-(pentapeptide)GlcNAc (lipid intermediate II). The chain is UDP-N-acetylglucosamine--N-acetylmuramyl-(pentapeptide) pyrophosphoryl-undecaprenol N-acetylglucosamine transferase from Chromobacterium violaceum (strain ATCC 12472 / DSM 30191 / JCM 1249 / CCUG 213 / NBRC 12614 / NCIMB 9131 / NCTC 9757 / MK).